The chain runs to 146 residues: MTRVVAQGTFDLIHPGHVHYLEDAAAMGDELHVILARRENVTHKDPPVLPNRQRRDVVAALDPVDHARIGHPEDIFAPIEAIDPDVIALGFDQHHDAAAIEAELADRGLDCAVERASPREARYDDEVLSSGDIADRVLAQRGDSDP.

ATP contacts are provided by residues 9–10 (TF), 14–17 (HPGH), and aspartate 92.

The protein belongs to the archaeal FAD synthase family. Homodimer. The cofactor is a divalent metal cation.

It carries out the reaction FMN + ATP + H(+) = FAD + diphosphate. The protein operates within cofactor biosynthesis; FAD biosynthesis; FAD from FMN: step 1/1. Functionally, catalyzes the transfer of the AMP portion of ATP to flavin mononucleotide (FMN) to produce flavin adenine dinucleotide (FAD) coenzyme. The sequence is that of FAD synthase from Halobacterium salinarum (strain ATCC 29341 / DSM 671 / R1).